Reading from the N-terminus, the 480-residue chain is Phenolic acid decarboxylase (480 aa).

Asn-163, His-185, and Glu-227 together coordinate Mn(2+). Prenylated FMN is bound by residues 163 to 168 and 184 to 185; these read NVGTYR and MH. Glu-278 functions as the Proton donor in the catalytic mechanism. The tract at residues 443-466 is disordered; it reads TTPVPPEPNPRETQLLDPPDGTEE.

Belongs to the UbiD family. YclC subfamily. In terms of assembly, homohexamer. Prenylated FMN serves as cofactor. Requires Mn(2+) as cofactor.

It catalyses the reaction 4-hydroxybenzoate + H(+) = phenol + CO2. The enzyme catalyses 3,4-dihydroxybenzoate + H(+) = catechol + CO2. Its activity is regulated as follows. Inhibited by Zn(2+), (2,3,4)-trihydroxybenzoate and (3,4,5)-trihydroxybenzoate. Ammonium and rubidium ions decrease the activity of the carboxylation of 3,4-dihydroxybenzoate by about 20%. Functionally, involved in the non-oxidative decarboxylation and detoxification of phenolic derivatives under anaerobic conditions. Oxygen-sensitive phenolic acid decarboxylase that catalyzes the reversible decarboxylation of 4-hydroxybenzoate and 3,4-dihydroxybenzoate. This is Phenolic acid decarboxylase from Sedimentibacter hydroxybenzoicus (Clostridium hydroxybenzoicum).